The chain runs to 643 residues: Methyl-accepting chemotaxis protein McpA (643 aa).

A helical membrane pass occupies residues Ile24–Asp44. A Cache domain is found at Asn49–Gly273. Residues Ile293 to Val313 form a helical membrane-spanning segment. Residues Pro312–Ser366 form the HAMP domain. The region spanning Ala371 to Asn607 is the Methyl-accepting transducer domain.

Belongs to the methyl-accepting chemotaxis (MCP) protein family.

The protein localises to the cell membrane. Chemotactic-signal transducers respond to changes in the concentration of attractants and repellents in the environment, transduce a signal from the outside to the inside of the cell, and facilitate sensory adaptation through the variation of the level of methylation. McpA is a chemoreceptor that binds to 12 different L-amino acids and mediates chemotaxis toward these amino acids. This is Methyl-accepting chemotaxis protein McpA from Pseudomonas putida (strain ATCC 47054 / DSM 6125 / CFBP 8728 / NCIMB 11950 / KT2440).